We begin with the raw amino-acid sequence, 146 residues long: Coactosin (146 aa).

The 132-residue stretch at 1–132 (MADVSSTELK…NEEELMTKVR (132 aa)) folds into the ADF-H domain.

This sequence belongs to the actin-binding proteins ADF family. Coactosin subfamily. In terms of processing, the N-terminus is blocked.

It is found in the cytoplasm. Its subcellular location is the cytoskeleton. In terms of biological role, binds to F-actin in a calcium independent manner. Binds to the filaments along their length. The protein is Coactosin (coaA) of Dictyostelium discoideum (Social amoeba).